A 512-amino-acid polypeptide reads, in one-letter code: Maturase K (512 aa).

It belongs to the intron maturase 2 family. MatK subfamily.

It is found in the plastid. Its subcellular location is the chloroplast. Functionally, usually encoded in the trnK tRNA gene intron. Probably assists in splicing its own and other chloroplast group II introns. This Filarum manserichense protein is Maturase K.